The sequence spans 93 residues: Cell division topological specificity factor (93 aa).

It belongs to the MinE family.

Prevents the cell division inhibition by proteins MinC and MinD at internal division sites while permitting inhibition at polar sites. This ensures cell division at the proper site by restricting the formation of a division septum at the midpoint of the long axis of the cell. The polypeptide is Cell division topological specificity factor (Synechococcus sp. (strain WH7803)).